Consider the following 248-residue polypeptide: Ureidoacrylate amidohydrolase RutB (248 aa).

The Proton acceptor role is filled by Asp41. The active site involves Lys150. Cys183 (nucleophile) is an active-site residue.

It belongs to the isochorismatase family. RutB subfamily.

It catalyses the reaction (Z)-3-ureidoacrylate + H2O + H(+) = (Z)-3-aminoacrylate + NH4(+) + CO2. The catalysed reaction is (Z)-3-ureidoacrylate + H2O = (Z)-3-aminoacrylate + carbamate + H(+). It carries out the reaction (Z)-2-methylureidoacrylate + H2O + H(+) = (Z)-2-methylaminoacrylate + NH4(+) + CO2. Functionally, hydrolyzes ureidoacrylate to form aminoacrylate and carbamate. The carbamate hydrolyzes spontaneously, thereby releasing one of the nitrogen atoms of the pyrimidine ring as ammonia and one of its carbon atoms as CO2. The sequence is that of Ureidoacrylate amidohydrolase RutB from Stutzerimonas stutzeri (strain A1501) (Pseudomonas stutzeri).